The following is a 23-amino-acid chain: Phospholipase A2 homolog 4 (23 aa).

The protein belongs to the phospholipase A2 family. Group II subfamily. K49 sub-subfamily. Homodimer; non-covalently linked (probable alternative/compact dimer conformation in solution). Expressed by the venom gland.

The protein resides in the secreted. Snake venom phospholipase A2 homolog that lacks enzymatic activity. Induces acute muscle damage after intramuscular injection in mice and disrupts negatively charged liposomes but not positively charged ones. Also exerts a weak anticoagulant effect only at concentrations of 40 ug/ml or higher. A model of myotoxic mechanism has been proposed: an apo Lys49-PLA2 is activated by the entrance of a hydrophobic molecule (e.g. fatty acid) at the hydrophobic channel of the protein leading to a reorientation of a monomer. This reorientation causes a transition between 'inactive' to 'active' states, causing alignment of C-terminal and membrane-docking sites (MDoS) side-by-side and putting the membrane-disruption sites (MDiS) in the same plane, exposed to solvent and in a symmetric position for both monomers. The MDoS region stabilizes the toxin on membrane by the interaction of charged residues with phospholipid head groups. Subsequently, the MDiS region destabilizes the membrane with penetration of hydrophobic residues. This insertion causes a disorganization of the membrane, allowing an uncontrolled influx of ions (i.e. calcium and sodium), and eventually triggering irreversible intracellular alterations and cell death. The sequence is that of Phospholipase A2 homolog 4 from Bothrops asper (Terciopelo).